The primary structure comprises 892 residues: Zinc finger protein 512B (892 aa).

Residues 1–82 are disordered; the sequence is MTDPFCVGGR…KKGRPKAENQ (82 aa). Over residues 8-19 the composition is skewed to low complexity; the sequence is GGRRLPGSSKSG. Residues 105–129 form a C2H2-type 1; atypical zinc finger; the sequence is VKCPNSGCWLEFPSIYGLKYHYQRC. The C2H2-type 2 zinc finger occupies 140 to 163; that stretch reads FPCPFCEAAFTSKTQLEKHRIWNH. Disordered stretches follow at residues 323 to 473 and 562 to 582; these read MVLL…RKKV and EHSA…EERE. The span at 371–384 shows a compositional bias: polar residues; it reads SMGQSSAFQLSADT. Low complexity predominate over residues 385-398; that stretch reads SSGSLSPGSRPSGG. Serine 409 is subject to Phosphoserine. Over residues 418 to 428 the composition is skewed to basic residues; that stretch reads TKHRRKQKTPK. The NuRD interaction motif signature appears at 421-427; it reads RRKQKTP. A C2H2-type 3 zinc finger spans residues 540–563; the sequence is LKCQHCRKQFKSKAGLNYHTMAEH. Residues 594–618 form a C2H2-type 4; atypical zinc finger; the sequence is LRCPQEGCGAAFSSLMGYQYHQRRC. The C2H2-type 5 zinc finger occupies 630–653; it reads FPCTHCGKTYRSKAGHDYHVRSEH. A disordered region spans residues 649 to 682; it reads VRSEHTAPPPEEPTDKSPEAEDPLGVERTPSGRV. The residue at position 686 (serine 686) is a Phosphoserine. The C2H2-type 6; atypical zinc finger occupies 750–774; it reads VNCPNDCCEAIYSSVSGLKAHLASC. The segment at 784 to 807 adopts a C2H2-type 7 zinc-finger fold; it reads YRCLLCPKEFSSESGVKYHILKTH. The tract at residues 812–892 is disordered; that stretch reads FRTSADPPPK…KVGVSKAPEK (81 aa). Residues 819 to 831 are compositionally biased toward basic and acidic residues; it reads PPKHRSQDSLVPK. The span at 832–849 shows a compositional bias: basic residues; it reads KEKKKNLAGGKKRGRKPK. Basic and acidic residues predominate over residues 850–876; that stretch reads ERTPEEPVAKLPPRRDDWPPGCRDKGA.

The protein belongs to the krueppel C2H2-type zinc-finger protein family. In terms of assembly, interacts (via its NuRD interaction motif) with RBBP4 of the nucleosome remodeling and deacetylase (NuRD) complex; the interaction is direct and may play a role in repressing gene expression.

Its subcellular location is the nucleus. Its function is as follows. Involved in transcriptional regulation by repressing gene expression. Associates with the nucleosome remodeling and histone deacetylase (NuRD) complex, which promotes transcriptional repression by histone deacetylation and nucleosome remodeling. This is Zinc finger protein 512B (ZNF512B) from Homo sapiens (Human).